A 356-amino-acid polypeptide reads, in one-letter code: S-adenosylmethionine:tRNA ribosyltransferase-isomerase (356 aa).

Belongs to the QueA family. Monomer.

The protein localises to the cytoplasm. It carries out the reaction 7-aminomethyl-7-carbaguanosine(34) in tRNA + S-adenosyl-L-methionine = epoxyqueuosine(34) in tRNA + adenine + L-methionine + 2 H(+). It participates in tRNA modification; tRNA-queuosine biosynthesis. Functionally, transfers and isomerizes the ribose moiety from AdoMet to the 7-aminomethyl group of 7-deazaguanine (preQ1-tRNA) to give epoxyqueuosine (oQ-tRNA). In Yersinia pestis, this protein is S-adenosylmethionine:tRNA ribosyltransferase-isomerase.